Here is a 422-residue protein sequence, read N- to C-terminus: Phosphoserine aminotransferase 2, chloroplastic (422 aa).

The N-terminal 50 residues, 1–50 (MAASTNSFLIGNQTQIPSLKPKSISQSFIHFTKPNTINLTTRTKSVSIRC), are a transit peptide targeting the chloroplast. Residue A51 is modified to N-acetylalanine. R101 contributes to the L-glutamate binding site. Pyridoxal 5'-phosphate-binding positions include 135 to 136 (AT), W161, T211, D233, and Q256. At K257 the chain carries N6-(pyridoxal phosphate)lysine. 298–299 (NT) provides a ligand contact to pyridoxal 5'-phosphate.

Belongs to the class-V pyridoxal-phosphate-dependent aminotransferase family. SerC subfamily. The cofactor is pyridoxal 5'-phosphate.

It localises to the plastid. It is found in the chloroplast. The enzyme catalyses O-phospho-L-serine + 2-oxoglutarate = 3-phosphooxypyruvate + L-glutamate. The catalysed reaction is 4-(phosphooxy)-L-threonine + 2-oxoglutarate = (R)-3-hydroxy-2-oxo-4-phosphooxybutanoate + L-glutamate. The protein operates within amino-acid biosynthesis; L-serine biosynthesis; L-serine from 3-phospho-D-glycerate: step 2/3. In terms of biological role, involved in the plastidial phosphorylated pathway of serine biosynthesis (PPSB). Catalyzes the reversible conversion of 3-phosphohydroxypyruvate to phosphoserine. The chain is Phosphoserine aminotransferase 2, chloroplastic (PSAT2) from Arabidopsis thaliana (Mouse-ear cress).